A 378-amino-acid polypeptide reads, in one-letter code: Ribosomal RNA large subunit methyltransferase G (378 aa).

This sequence belongs to the methyltransferase superfamily. RlmG family.

It is found in the cytoplasm. The enzyme catalyses guanosine(1835) in 23S rRNA + S-adenosyl-L-methionine = N(2)-methylguanosine(1835) in 23S rRNA + S-adenosyl-L-homocysteine + H(+). Specifically methylates the guanine in position 1835 (m2G1835) of 23S rRNA. This is Ribosomal RNA large subunit methyltransferase G from Salmonella heidelberg (strain SL476).